The chain runs to 374 residues: Speckle-type POZ protein (374 aa).

Positions 31–161 (KFSYMWTINN…DDKLTLFCEV (131 aa)) constitute an MATH domain. The interval 71–191 (VNPKGLDEES…PECRLADELG (121 aa)) is required for nuclear localization. Positions 123–133 (YRFVQGKDWGF) are important for binding substrate proteins. Residues 173-297 (QNTMNMVKVP…MCEDALCSNL (125 aa)) form the BTB domain. 2 important for homodimerization regions span residues 186–217 (LADELGGLWENSRFTDCCLCVAGQEFQAHKAI) and 297–355 (LSVE…AYRS).

This sequence belongs to the Tdpoz family. As to quaternary structure, interacts with GLI2 and GLI3. Homodimer and homooligomer. Heterodimer with SPOPL. Each dimer interacts with two CUL3 molecules. Part of cullin-RING-based BCR (BTB-CUL3-RBX1) E3 ubiquitin-protein ligase complexes that contain CUL3 and homodimeric SPOP, or the heterodimer formed by SPOP and SPOPL, plus a target protein, such as MACROH2A1, PDX1/IPF1, BMI1, BRMS1 and DAXX. Interacts with IRF1; this interaction mediates IRF1 proteasomal degradation. Interacts with HNF1A.

The protein resides in the nucleus. The protein localises to the nucleus speckle. The protein operates within protein modification; protein ubiquitination. In terms of biological role, component of a cullin-RING-based BCR (BTB-CUL3-RBX1) E3 ubiquitin-protein ligase complex that mediates the ubiquitination of target proteins, leading most often to their proteasomal degradation. In complex with CUL3, involved in ubiquitination and proteasomal degradation of BRMS1, DAXX, PDX1/IPF1, GLI2 and GLI3. In complex with CUL3, involved in ubiquitination of MACROH2A1 and BMI1; this does not lead to their proteasomal degradation. Inhibits transcriptional activation of PDX1/IPF1 targets, such as insulin, by promoting PDX1/IPF1 degradation. The cullin-RING-based BCR (BTB-CUL3-RBX1) E3 ubiquitin-protein ligase complex containing homodimeric SPOP has higher ubiquitin ligase activity than the complex that contains the heterodimer formed by SPOP and SPOPL. Involved in the regulation of bromodomain and extra-terminal motif (BET) proteins BRD2, BRD3, BRD4 stability.Plays an essential role for proper translation, but not for their degradation, of critical DNA replication licensing factors CDT1 and CDC6, thereby participating in DNA synthesis and cell proliferation. Regulates interferon regulatory factor 1/IRF1 proteasomal turnover by targeting S/T-rich degrons in IRF1. Involved in ubiquitination of BRDT and promotes its degradation, thereby regulates histone removal in early condensing spermatids prior to histone-to-protamine exchange. The chain is Speckle-type POZ protein (SPOP) from Bos taurus (Bovine).